We begin with the raw amino-acid sequence, 213 residues long: A-type ATP synthase subunit D (213 aa).

The protein belongs to the V-ATPase D subunit family. Has multiple subunits with at least A(3), B(3), C, D, E, F, H, I and proteolipid K(x).

It is found in the cell membrane. Component of the A-type ATP synthase that produces ATP from ADP in the presence of a proton gradient across the membrane. This Saccharolobus solfataricus (strain ATCC 35092 / DSM 1617 / JCM 11322 / P2) (Sulfolobus solfataricus) protein is A-type ATP synthase subunit D.